Here is a 455-residue protein sequence, read N- to C-terminus: Glycosyl hydrolase family 109 protein (455 aa).

Residues 1–33 constitute a signal peptide (tat-type signal); the sequence is MAGIDRRGFLKASMASVAAAALAGCASQQGTSA. Residues 62 to 63, Asp-84, Gln-112, 133 to 136, 153 to 154, and Asn-182 contribute to the NAD(+) site; these read ER, WALH, and EV. Substrate-binding positions include Tyr-211, Arg-230, 242–245, and Tyr-324; that span reads YPTH. Tyr-242 contributes to the NAD(+) binding site.

The protein belongs to the Gfo/Idh/MocA family. Glycosyl hydrolase 109 subfamily. The cofactor is NAD(+). Post-translationally, predicted to be exported by the Tat system. The position of the signal peptide cleavage has not been experimentally proven.

Glycosidase. The sequence is that of Glycosyl hydrolase family 109 protein from Shewanella amazonensis (strain ATCC BAA-1098 / SB2B).